The following is a 349-amino-acid chain: Glycine-rich cell wall structural protein (349 aa).

The signal sequence occupies residues 1 to 23; that stretch reads MGKVSFGFLGLMLVVVVIGVVEC.

The protein resides in the secreted. It is found in the cell wall. Responsible for plasticity of the cell wall. This is Glycine-rich cell wall structural protein from Arabidopsis thaliana (Mouse-ear cress).